Consider the following 485-residue polypeptide: MTDIINKLQAFADANPQSIAVRHTTDELTYQQLMDESSKLAHRLQGSKKPMILFGHMSPYMIVGMIGAIKAGCGYVPVDTSIPEDRIKMIINKVQPEFVFNTTDESFESLEGEVFTIEDIKTSQDPVIFDSQIKDNDTVYTIFTSGSTGEPKGVQIEYASLVQFTEWMLELNKSGNKQQWLNQAPFSFDLSVMAIYPCLASGGTLNLVDKNMINKPKLLNEMLTATPINIWVSTPSFMEMCLLLPTLNEEQYGSLNEFFFCGEILPHRAAKALVSRFPSATIYNTYGPTEATVAVTSIQITQEILDQYPTLPVGVERLGARLSTTDDGELVIEGQSVSLGYLKNDQKTAEVFNFDDGIRTYHTGDKAKFENGQWFIQGRIDFQIKLNGYRMELEEIETQLRQSEFVKEAIVVPVYKNDKVIHLIGAIVPTTEVTDNAEMTKNIKNDLKSRLPEYMIPRKFEWMEQLPLTSNGKIDRKKIAEVING.

144–145 (TS) contacts ATP. Position 189 (aspartate 189) interacts with D-alanine. 284–289 (NTYGPT) serves as a coordination point for ATP. Valine 293 serves as a coordination point for D-alanine. ATP is bound by residues aspartate 365 and lysine 473. Position 473 (lysine 473) interacts with D-alanine.

The protein belongs to the ATP-dependent AMP-binding enzyme family. DltA subfamily.

It localises to the cytoplasm. It carries out the reaction holo-[D-alanyl-carrier protein] + D-alanine + ATP = D-alanyl-[D-alanyl-carrier protein] + AMP + diphosphate. The protein operates within cell wall biogenesis; lipoteichoic acid biosynthesis. In terms of biological role, catalyzes the first step in the D-alanylation of lipoteichoic acid (LTA), the activation of D-alanine and its transfer onto the D-alanyl carrier protein (Dcp) DltC. In an ATP-dependent two-step reaction, forms a high energy D-alanyl-AMP intermediate, followed by transfer of the D-alanyl residue as a thiol ester to the phosphopantheinyl prosthetic group of the Dcp. D-alanylation of LTA plays an important role in modulating the properties of the cell wall in Gram-positive bacteria, influencing the net charge of the cell wall. The chain is D-alanine--D-alanyl carrier protein ligase from Staphylococcus aureus (strain Mu3 / ATCC 700698).